Reading from the N-terminus, the 366-residue chain is Phospho-N-acetylmuramoyl-pentapeptide-transferase (366 aa).

10 consecutive transmembrane segments (helical) span residues 27-47 (GAAI…ISLL), 76-96 (PTMG…IWVI), 101-121 (FFWL…WDDF), 136-156 (IKLL…LADP), 176-196 (IDIG…SSNA), 205-225 (GLAA…SYIS), 241-261 (GAGE…GFLW), 264-284 (CYPA…SALG), 285-305 (VVAI…IFVI), and 343-363 (AVTV…LSSL).

The protein belongs to the glycosyltransferase 4 family. MraY subfamily. Mg(2+) is required as a cofactor.

The protein localises to the cell inner membrane. The catalysed reaction is UDP-N-acetyl-alpha-D-muramoyl-L-alanyl-gamma-D-glutamyl-meso-2,6-diaminopimeloyl-D-alanyl-D-alanine + di-trans,octa-cis-undecaprenyl phosphate = di-trans,octa-cis-undecaprenyl diphospho-N-acetyl-alpha-D-muramoyl-L-alanyl-D-glutamyl-meso-2,6-diaminopimeloyl-D-alanyl-D-alanine + UMP. It participates in cell wall biogenesis; peptidoglycan biosynthesis. In terms of biological role, catalyzes the initial step of the lipid cycle reactions in the biosynthesis of the cell wall peptidoglycan: transfers peptidoglycan precursor phospho-MurNAc-pentapeptide from UDP-MurNAc-pentapeptide onto the lipid carrier undecaprenyl phosphate, yielding undecaprenyl-pyrophosphoryl-MurNAc-pentapeptide, known as lipid I. The sequence is that of Phospho-N-acetylmuramoyl-pentapeptide-transferase from Methylacidiphilum infernorum (isolate V4) (Methylokorus infernorum (strain V4)).